A 324-amino-acid chain; its full sequence is MEARNQTAISKFLLLGLIEDPELQPVLFSLFLSMYLVTILGNLLILLAVISDSHLHTPMYFFLSNLSFLDICLSTTTIPKMLVNIQAQNRSITYSGCLTQICFVLFFAGLENCLLAAMAYDRYVAICHPLRYTVIMNPRLCGLLILLSLLTSVVNALLLSLMVLRLSFCTDLEIPLFFCELAQVIQLTCSDTLINNILIYFAACIFGGVPLSGIILSYTQITSCVLRMPSASGKHKAVSTCGSHLSIVLLFYGAGLGVYISSVVTDSPRKTAVASVMYSVFPQMVNPFIYSLRNKDMKGTLRKFIGRIPSLLWCAICFGFRFLE.

Residues 1–25 (MEARNQTAISKFLLLGLIEDPELQP) are Extracellular-facing. Asn5 carries N-linked (GlcNAc...) asparagine glycosylation. Residues 26–46 (VLFSLFLSMYLVTILGNLLIL) form a helical membrane-spanning segment. The Cytoplasmic portion of the chain corresponds to 47–54 (LAVISDSH). Residues 55–75 (LHTPMYFFLSNLSFLDICLST) form a helical membrane-spanning segment. Over 76–99 (TTIPKMLVNIQAQNRSITYSGCLT) the chain is Extracellular. Asn89 is a glycosylation site (N-linked (GlcNAc...) asparagine). A disulfide bridge links Cys97 with Cys189. Residues 100-120 (QICFVLFFAGLENCLLAAMAY) form a helical membrane-spanning segment. Topologically, residues 121–139 (DRYVAICHPLRYTVIMNPR) are cytoplasmic. The helical transmembrane segment at 140–160 (LCGLLILLSLLTSVVNALLLS) threads the bilayer. Over 161-197 (LMVLRLSFCTDLEIPLFFCELAQVIQLTCSDTLINNI) the chain is Extracellular. The chain crosses the membrane as a helical span at residues 198–217 (LIYFAACIFGGVPLSGIILS). Residues 218 to 237 (YTQITSCVLRMPSASGKHKA) are Cytoplasmic-facing. A helical membrane pass occupies residues 238-258 (VSTCGSHLSIVLLFYGAGLGV). The Extracellular portion of the chain corresponds to 259 to 271 (YISSVVTDSPRKT). A helical transmembrane segment spans residues 272–292 (AVASVMYSVFPQMVNPFIYSL). Topologically, residues 293 to 324 (RNKDMKGTLRKFIGRIPSLLWCAICFGFRFLE) are cytoplasmic.

This sequence belongs to the G-protein coupled receptor 1 family.

It localises to the cell membrane. In terms of biological role, odorant receptor. This is Olfactory receptor 7G2 (OR7G2) from Homo sapiens (Human).